The sequence spans 105 residues: UPF0235 protein RP839 (105 aa).

This sequence belongs to the UPF0235 family.

The sequence is that of UPF0235 protein RP839 from Rickettsia prowazekii (strain Madrid E).